The following is a 178-amino-acid chain: MDHAEQGPDRPGVDDPGRGRRIGIDVGSVRIGVASSDPDGILATPVETVPRSKERGPDAPDIRRIADIVEEYEAVEVIVGLPQTLRGERGKAASIATVFAKRLRRKVDPIPVRMADERLTTVTAARALRESGVSARGQRPVIDQAAAVAILQGWLDERSRSVNAGDSGGDAQLPEGGQ.

Residues 1-18 are compositionally biased toward basic and acidic residues; it reads MDHAEQGPDRPGVDDPGR. The disordered stretch occupies residues 1 to 21; it reads MDHAEQGPDRPGVDDPGRGRR.

It belongs to the YqgF nuclease family.

It localises to the cytoplasm. In terms of biological role, could be a nuclease involved in processing of the 5'-end of pre-16S rRNA. The protein is Putative pre-16S rRNA nuclease of Rhodococcus jostii (strain RHA1).